Here is a 445-residue protein sequence, read N- to C-terminus: Mitochondrial-processing peptidase subunit alpha-2 (445 aa).

The transit peptide at methionine 1 to serine 13 directs the protein to the mitochondrion.

This sequence belongs to the peptidase M16 family. In terms of assembly, heterodimer of alpha and beta subunits, forming the mitochondrial processing protease (MPP) in which subunit alpha is involved in substrate recognition and binding and subunit beta is the catalytic subunit.

The protein resides in the mitochondrion matrix. Its function is as follows. Substrate recognition and binding subunit of the essential mitochondrial processing protease (MPP), which cleaves the mitochondrial sequence off newly imported precursors proteins. This is Mitochondrial-processing peptidase subunit alpha-2 (mppA2) from Dictyostelium discoideum (Social amoeba).